The primary structure comprises 116 residues: Aspartate 1-decarboxylase (116 aa).

The active-site Schiff-base intermediate with substrate; via pyruvic acid is serine 25. A Pyruvic acid (Ser) modification is found at serine 25. Threonine 57 is a substrate binding site. Tyrosine 58 (proton donor) is an active-site residue. A substrate-binding site is contributed by 72 to 74 (GAA).

Belongs to the PanD family. As to quaternary structure, heterooctamer of four alpha and four beta subunits. Requires pyruvate as cofactor. Post-translationally, is synthesized initially as an inactive proenzyme, which is activated by self-cleavage at a specific serine bond to produce a beta-subunit with a hydroxyl group at its C-terminus and an alpha-subunit with a pyruvoyl group at its N-terminus.

Its subcellular location is the cytoplasm. It catalyses the reaction L-aspartate + H(+) = beta-alanine + CO2. It participates in cofactor biosynthesis; (R)-pantothenate biosynthesis; beta-alanine from L-aspartate: step 1/1. Catalyzes the pyruvoyl-dependent decarboxylation of aspartate to produce beta-alanine. The polypeptide is Aspartate 1-decarboxylase (Helicobacter pylori (strain HPAG1)).